We begin with the raw amino-acid sequence, 460 residues long: Probable carboxypeptidase TRV_02791 (460 aa).

The N-terminal stretch at Met1–Ser22 is a signal peptide. N-linked (GlcNAc...) asparagine glycosylation occurs at Asn98. Asp175 provides a ligand contact to Zn(2+). Catalysis depends on Glu207, which acts as the Proton acceptor. A Zn(2+)-binding site is contributed by Glu208. An N-linked (GlcNAc...) asparagine glycan is attached at Asn395.

This sequence belongs to the peptidase M20A family. Zn(2+) is required as a cofactor.

Its subcellular location is the secreted. This chain is Probable carboxypeptidase TRV_02791, found in Trichophyton verrucosum (strain HKI 0517).